The primary structure comprises 115 residues: ComG operon protein 5 (115 aa).

A propeptide spans 1-7 (leader sequence); sequence MWRENKG. Position 8 is an N-methylphenylalanine (Phe8). The helical transmembrane segment at 13 to 31 threads the bilayer; sequence TMSALSLWLFVLLTVVPLW.

Post-translationally, processing of ComGE in competent cells requires ComC.

The protein localises to the cell membrane. It is found in the cell surface. In terms of biological role, required for transformation and DNA binding. This is ComG operon protein 5 (comGE) from Bacillus subtilis (strain 168).